Consider the following 210-residue polypeptide: MSGHGHGHGHGHGCCECEHEPAERGVEYELYRRIDIEKLQCLNESRDGDGKLVFKPWDQRTDRNKFVESDADEELLFNIPFTGSVKLKGIIISGEDDESHPAEIRLFKNIPQMSFDDTSREPEQAFRLNRDPRAELEYPTKIARFSNVEHLSIHVSRNFGAESTRVYYIGLRGEYTEAHRHEVTICNYEAAANPADHKVESITPQTQFIS.

Positions His19–Ala191 constitute a PITH domain.

The protein belongs to the PITHD1 family.

It localises to the cytoplasm. Functionally, may play a role in promoting megakaryocyte differentiation by up-regulating RUNX1 expression. The sequence is that of PITH domain-containing protein 1 (pithd1) from Danio rerio (Zebrafish).